Consider the following 218-residue polypeptide: uncharacterized protein (218 aa).

Polar residues-rich tracts occupy residues Met-1–Phe-21 and Leu-68–Ile-102. 3 disordered regions span residues Met-1–Ser-39, Glu-63–Gly-116, and Gly-170–Gln-205. Over residues Lys-183–His-195 the composition is skewed to basic and acidic residues.

This is an uncharacterized protein from Caenorhabditis elegans.